Reading from the N-terminus, the 231-residue chain is Large ribosomal subunit protein uL1 (231 aa).

The protein belongs to the universal ribosomal protein uL1 family. Part of the 50S ribosomal subunit.

In terms of biological role, binds directly to 23S rRNA. The L1 stalk is quite mobile in the ribosome, and is involved in E site tRNA release. Functionally, protein L1 is also a translational repressor protein, it controls the translation of the L11 operon by binding to its mRNA. The chain is Large ribosomal subunit protein uL1 from Hydrogenovibrio crunogenus (strain DSM 25203 / XCL-2) (Thiomicrospira crunogena).